Consider the following 319-residue polypeptide: MTKKMSMQDIILNLQEYWAEQGANLMQAYDNEVGAGTQSPYTFLRANGPEPWNAAYVQPSRRPADGRYGHNPNRLFQHHQFQVVMKPSPENIQELYLGSLTRLGLKASEHDIRFVEDNWENPSMGAAGIGWEVWLDGMEVTQFTYFQQVGSIEVDSVTAEITYGLERLASYIQDVLSVYDLEWGNGVMYGDIFKEPEYEHSVYSFDQSDEKMLLENFDQYEAEAKRLTKLGLVHPAYDYILKLSHIFNLLDARGAVSVTERAGYMHRIRSMARAIAREFITARAKLGFPLLKDSKLREKYIGEKGIYTKKLAKKIKKEA.

Belongs to the class-II aminoacyl-tRNA synthetase family. As to quaternary structure, tetramer of two alpha and two beta subunits.

The protein resides in the cytoplasm. It carries out the reaction tRNA(Gly) + glycine + ATP = glycyl-tRNA(Gly) + AMP + diphosphate. The chain is Glycine--tRNA ligase alpha subunit from Oenococcus oeni (strain ATCC BAA-331 / PSU-1).